The sequence spans 250 residues: DNA repair protein RecO (250 aa).

Belongs to the RecO family.

Its function is as follows. Involved in DNA repair and RecF pathway recombination. The sequence is that of DNA repair protein RecO from Staphylococcus aureus (strain COL).